We begin with the raw amino-acid sequence, 391 residues long: UPF0328 protein ECU06_1650 (391 aa).

The protein belongs to the UPF0328 family.

The protein is UPF0328 protein ECU06_1650 of Encephalitozoon cuniculi (strain GB-M1) (Microsporidian parasite).